The chain runs to 150 residues: UPF0336 protein SGR_2883 (150 aa).

The region spanning 10–116 (RTYPPTPAYE…STIEAVKSLA (107 aa)) is the MaoC-like domain.

Belongs to the UPF0336 family.

In Streptomyces griseus subsp. griseus (strain JCM 4626 / CBS 651.72 / NBRC 13350 / KCC S-0626 / ISP 5235), this protein is UPF0336 protein SGR_2883.